A 250-amino-acid chain; its full sequence is Endonuclease NucS (250 aa).

Belongs to the NucS endonuclease family.

It localises to the cytoplasm. In terms of biological role, cleaves both 3' and 5' ssDNA extremities of branched DNA structures. This chain is Endonuclease NucS, found in Sulfolobus acidocaldarius (strain ATCC 33909 / DSM 639 / JCM 8929 / NBRC 15157 / NCIMB 11770).